The chain runs to 42 residues: Thymosin beta-10 (42 aa).

Composition is skewed to basic and acidic residues over residues 1–25 (MADK…ETQE) and 33–42 (ETIEQEKQAK). Residues 1–42 (MADKPDMGEINSFDKAKLKKTETQEKNTLPTKETIEQEKQAK) form a disordered region. A2 carries the post-translational modification N-acetylalanine. An N6-acetyllysine modification is found at K4. S12 bears the Phosphoserine mark. K15 is modified (N6-acetyllysine). Phosphothreonine is present on residues T21, T23, and T34. At K39 the chain carries N6-acetyllysine.

It belongs to the thymosin beta family.

It localises to the cytoplasm. The protein resides in the cytoskeleton. In terms of biological role, plays an important role in the organization of the cytoskeleton. Binds to and sequesters actin monomers (G actin) and therefore inhibits actin polymerization. The chain is Thymosin beta-10 (TMSB10) from Sus scrofa (Pig).